The sequence spans 542 residues: uncharacterized protein (542 aa).

Helical transmembrane passes span 4–23, 28–47, 51–70, 91–113, and 160–182; these read FVENQLLALVAIMGIGLLLG, FGFRLGVAAVLFVGLAFSTI, ITVPPLIYVVGLALFVYTIG, LALGAIIATTAIAWVVIKALGLA, and YSLTYPLGVLVVILTIAVCGGLF. RCK C-terminal domains follow at residues 190–272 and 274–355; these read AKNA…LLGE and VDGH…IFGD. Transmembrane regions (helical) follow at residues 363–385, 390–412, 425–447, 457–479, and 519–541; these read FNLVPLVVGLSLGVLVGMMEFPL, ALSLGNAGGPLLIALLLGAMGRT, LALRQLGITMFLAAIGTTAGAGF, LLIIGVGALLTLVISVLVLVIGH, and YTSVYPLAMVAKIIAAQVLLFLL.

This sequence belongs to the AAE transporter (TC 2.A.81) family.

The protein resides in the cell membrane. This is an uncharacterized protein from Corynebacterium efficiens (strain DSM 44549 / YS-314 / AJ 12310 / JCM 11189 / NBRC 100395).